The primary structure comprises 262 residues: Cyclin-dependent kinase inhibitor 1 (262 aa).

The tract at residues 140-212 (SDVAEAGSEH…SAQQATRPKI (73 aa)) is disordered. Residues 160-169 (SGRDRERRET) show a composition bias toward basic and acidic residues. The span at 198–208 (SAATASAQQAT) shows a compositional bias: low complexity.

It belongs to the CDI family. ICK/KRP subfamily.

The chain is Cyclin-dependent kinase inhibitor 1 (KRP1) from Oryza sativa subsp. indica (Rice).